A 303-amino-acid polypeptide reads, in one-letter code: D-alanine--D-alanine ligase (303 aa).

The ATP-grasp domain occupies 99 to 293 (TYRFLKDIVE…FEELVEIILK (195 aa)). 125 to 176 (GYPCVVKPRREGSSIGVFICESDEEFQHALKEDLPRYGSVIVQKYIPGREMT) contacts ATP. Mg(2+) contacts are provided by aspartate 248, glutamate 260, and asparagine 262.

The protein belongs to the D-alanine--D-alanine ligase family. Mg(2+) is required as a cofactor. It depends on Mn(2+) as a cofactor.

The protein localises to the cytoplasm. It carries out the reaction 2 D-alanine + ATP = D-alanyl-D-alanine + ADP + phosphate + H(+). It functions in the pathway cell wall biogenesis; peptidoglycan biosynthesis. In terms of biological role, cell wall formation. This chain is D-alanine--D-alanine ligase, found in Thermotoga petrophila (strain ATCC BAA-488 / DSM 13995 / JCM 10881 / RKU-1).